Consider the following 258-residue polypeptide: tRNA pseudouridine synthase A (258 aa).

Residue aspartate 53 is the Nucleophile of the active site. Tyrosine 111 lines the substrate pocket.

It belongs to the tRNA pseudouridine synthase TruA family. Homodimer.

The catalysed reaction is uridine(38/39/40) in tRNA = pseudouridine(38/39/40) in tRNA. Functionally, formation of pseudouridine at positions 38, 39 and 40 in the anticodon stem and loop of transfer RNAs. The protein is tRNA pseudouridine synthase A of Streptococcus agalactiae serotype Ia (strain ATCC 27591 / A909 / CDC SS700).